We begin with the raw amino-acid sequence, 321 residues long: MIKKIAVLTSGGDAPGMNAAIRGVVRSALSEGLEVYGIYEGYYGLYHNKIQQLTRYSVSDIINRGGTFLGSARFPEFKDPAVREKCVEILRSHGIDALVVIGGDGSYMGAKLLTEEHDFPCVGIPGTIDNDVAGTDYTIGYQTALETAVEAIDRLRDTSSSHKRISIVEIMGRHCSDLTISAAIAGGCEYIVASEIEFNREELIKQIERAIIKGKRHAIIAITELLCDVNELAREIEARVKHETRATILGHIQRGGTPCAFDRILGSRMGVYAVDLLLQGKGGYCVGIQNEQLVHHDIIDAINNMRREFKADWLAMSKRLD.

Glycine 12 lines the ATP pocket. Residues 22 to 26 (RGVVR) and 55 to 60 (RYSVSD) contribute to the ADP site. Residues 73–74 (RF) and 103–106 (GDGS) each bind ATP. Aspartate 104 provides a ligand contact to Mg(2+). A substrate-binding site is contributed by 127–129 (TID). Aspartate 129 acts as the Proton acceptor in catalysis. Arginine 156 serves as a coordination point for ADP. Residues arginine 164 and 171–173 (MGR) each bind substrate. ADP is bound by residues 187–189 (GCE), lysine 213, and 215–217 (KRH). Residues glutamate 224, arginine 245, and 251 to 254 (HIQR) contribute to the substrate site.

The protein belongs to the phosphofructokinase type A (PFKA) family. ATP-dependent PFK group I subfamily. Prokaryotic clade 'B1' sub-subfamily. Homotetramer. It depends on Mg(2+) as a cofactor.

Its subcellular location is the cytoplasm. It carries out the reaction beta-D-fructose 6-phosphate + ATP = beta-D-fructose 1,6-bisphosphate + ADP + H(+). It participates in carbohydrate degradation; glycolysis; D-glyceraldehyde 3-phosphate and glycerone phosphate from D-glucose: step 3/4. With respect to regulation, allosterically activated by ADP and other diphosphonucleosides, and allosterically inhibited by phosphoenolpyruvate. In terms of biological role, catalyzes the phosphorylation of D-fructose 6-phosphate to fructose 1,6-bisphosphate by ATP, the first committing step of glycolysis. In Histophilus somni (strain 129Pt) (Haemophilus somnus), this protein is ATP-dependent 6-phosphofructokinase.